The following is a 353-amino-acid chain: ATP-dependent kinase YFH7 (353 aa).

An ATP-binding site is contributed by 31-39 (GSPGSGKST).

This sequence belongs to the YFH7 family.

ATP-dependent kinase that could be involved in endoplasmic reticulum membrane assembly. This Saccharomyces cerevisiae (strain RM11-1a) (Baker's yeast) protein is ATP-dependent kinase YFH7 (YFH7).